A 355-amino-acid polypeptide reads, in one-letter code: 3-dehydroquinate synthase (355 aa).

NAD(+)-binding positions include 71–76 (EGEASK), 105–109 (GVVGD), 129–130 (TS), K142, K151, and 169–172 (TLNT). Zn(2+) is bound by residues E184, H246, and H263.

It belongs to the sugar phosphate cyclases superfamily. Dehydroquinate synthase family. Requires NAD(+) as cofactor. Co(2+) is required as a cofactor. Zn(2+) serves as cofactor.

The protein localises to the cytoplasm. The enzyme catalyses 7-phospho-2-dehydro-3-deoxy-D-arabino-heptonate = 3-dehydroquinate + phosphate. It functions in the pathway metabolic intermediate biosynthesis; chorismate biosynthesis; chorismate from D-erythrose 4-phosphate and phosphoenolpyruvate: step 2/7. Its function is as follows. Catalyzes the conversion of 3-deoxy-D-arabino-heptulosonate 7-phosphate (DAHP) to dehydroquinate (DHQ). The chain is 3-dehydroquinate synthase from Streptococcus mutans serotype c (strain ATCC 700610 / UA159).